An 888-amino-acid chain; its full sequence is Pumilio homology domain family member 4 (888 aa).

Phosphothreonine occurs at positions 205, 212, and 252. 2 disordered regions span residues 236–270 and 467–551; these read KAKKPSVGANNTAKTRTQSISFDNTPSSTSFIPPT and MNSA…RKIE. Residues 243–270 show a composition bias toward polar residues; it reads GANNTAKTRTQSISFDNTPSSTSFIPPT. Serine 256 carries the phosphoserine modification. Composition is skewed to low complexity over residues 478–499 and 521–543; these read NNNSMSSHNDNDNIGNSNYNNK and NNNNNNNNNNNNNNNSNATNSNS. A PUM-HD domain is found at 539-888; the sequence is TNSNSAEKQR…RIIGMLHLDS (350 aa). 8 Pumilio repeats span residues 563–598, 599–634, 635–671, 672–707, 708–743, 744–783, 784–821, and 823–861; these read QYIGSIHSLCKDQHGCRFLQKQLDILGSKAADAIFE, ETKDYTVELMTDSFGNYLIQKLLEEVTTEQRIVLTK, ISSPHFVEISLNPHGTRALQKLIECIKTDEEAQIVVD, SLRPYTVQLSKDLNGNHVIQKCLQRLKPENFQFIFD, AISDSCIDIATHRHGCCVLQRCLDHGTTEQCDNLCD, KLLALVDKLTLDPFGNYVVQYIITKEAEKNKYDYTHKIVH, LLKPRAIELSIHKFGSNVIEKILKTAIVSEPMILEILN, and GGETGIQSLLNDSYGNYVLQTALDISHKQNDYLYKRLSE.

In terms of biological role, is not essential for haploid growth, but may affect diploid formation. In Saccharomyces cerevisiae (strain ATCC 204508 / S288c) (Baker's yeast), this protein is Pumilio homology domain family member 4 (PUF4).